The chain runs to 175 residues: Inorganic pyrophosphatase (175 aa).

Lysine 30, arginine 44, and tyrosine 56 together coordinate substrate. 3 residues coordinate Mg(2+): aspartate 66, aspartate 71, and aspartate 103. Tyrosine 142 is a binding site for substrate.

This sequence belongs to the PPase family. In terms of assembly, homohexamer. Mg(2+) is required as a cofactor.

Its subcellular location is the cytoplasm. It carries out the reaction diphosphate + H2O = 2 phosphate + H(+). Functionally, catalyzes the hydrolysis of inorganic pyrophosphate (PPi) forming two phosphate ions. The protein is Inorganic pyrophosphatase of Haemophilus ducreyi (strain 35000HP / ATCC 700724).